We begin with the raw amino-acid sequence, 268 residues long: 26S proteasome regulatory subunit RPN10 (268 aa).

In terms of domain architecture, VWFA spans 5–190; sequence ATVLVIDNSE…LYENIASSPI (186 aa). In terms of domain architecture, UIM spans 223–242; that stretch reads SMDPELAMALRLSMEEEQQR. The disordered stretch occupies residues 226 to 268; sequence PELAMALRLSMEEEQQRQERLRQQQQQQDQPEQSEQPEQHQDK. Residues 235–247 show a composition bias toward basic and acidic residues; the sequence is SMEEEQQRQERLR. A compositionally biased stretch (low complexity) spans 248–261; that stretch reads QQQQQQDQPEQSEQ.

Belongs to the proteasome subunit S5A family. The 26S proteasome is composed of a core protease, known as the 20S proteasome, capped at one or both ends by the 19S regulatory complex (RC). The RC is composed of at least 18 different subunits in two subcomplexes, the base and the lid, which form the portions proximal and distal to the 20S proteolytic core, respectively. Ubiquitinated, leading to its degradation. Ubiquitination is promoted by HUL5.

Its function is as follows. Multiubiquitin binding protein. The chain is 26S proteasome regulatory subunit RPN10 (RPN10) from Saccharomyces cerevisiae (strain ATCC 204508 / S288c) (Baker's yeast).